A 375-amino-acid chain; its full sequence is Queuine tRNA-ribosyltransferase (375 aa).

The active-site Proton acceptor is Asp-89. Substrate is bound by residues Asp-89–Phe-93, Asp-143, Gln-187, and Gly-214. An RNA binding region spans residues Gly-245–Asp-251. The active-site Nucleophile is Asp-264. Residues Thr-269 to Arg-273 form an RNA binding; important for wobble base 34 recognition region. Positions 302, 304, 307, and 333 each coordinate Zn(2+).

Belongs to the queuine tRNA-ribosyltransferase family. In terms of assembly, homodimer. Within each dimer, one monomer is responsible for RNA recognition and catalysis, while the other monomer binds to the replacement base PreQ1. Zn(2+) is required as a cofactor.

The enzyme catalyses 7-aminomethyl-7-carbaguanine + guanosine(34) in tRNA = 7-aminomethyl-7-carbaguanosine(34) in tRNA + guanine. The protein operates within tRNA modification; tRNA-queuosine biosynthesis. Catalyzes the base-exchange of a guanine (G) residue with the queuine precursor 7-aminomethyl-7-deazaguanine (PreQ1) at position 34 (anticodon wobble position) in tRNAs with GU(N) anticodons (tRNA-Asp, -Asn, -His and -Tyr). Catalysis occurs through a double-displacement mechanism. The nucleophile active site attacks the C1' of nucleotide 34 to detach the guanine base from the RNA, forming a covalent enzyme-RNA intermediate. The proton acceptor active site deprotonates the incoming PreQ1, allowing a nucleophilic attack on the C1' of the ribose to form the product. After dissociation, two additional enzymatic reactions on the tRNA convert PreQ1 to queuine (Q), resulting in the hypermodified nucleoside queuosine (7-(((4,5-cis-dihydroxy-2-cyclopenten-1-yl)amino)methyl)-7-deazaguanosine). This chain is Queuine tRNA-ribosyltransferase, found in Salmonella agona (strain SL483).